We begin with the raw amino-acid sequence, 148 residues long: Snaclec B3/B5 (148 aa).

Residues 1–24 (MGRFIFVSFGLLVVFLSLSGTGAA) form the signal peptide. Intrachain disulfides connect Cys27–Cys38, Cys55–Cys144, and Cys121–Cys136. The 112-residue stretch at 34-145 (YDQHCYKVFD…CRLLGHFVCK (112 aa)) folds into the C-type lectin domain.

It belongs to the snaclec family. Heterodimer; disulfide-linked. As to expression, expressed by the venom gland.

The protein resides in the secreted. Interferes with one step of hemostasis (modulation of platelet aggregation, or coagulation cascade, for example). The chain is Snaclec B3/B5 from Macrovipera lebetinus (Levantine viper).